The primary structure comprises 141 residues: HTH-type transcriptional regulator MntR (141 aa).

An HTH dtxR-type domain is found at 1–63 (MPTPSMEDYI…YEKYRGLVLT (63 aa)). Positions 8, 11, 77, 99, 102, and 103 each coordinate Mn(2+).

This sequence belongs to the DtxR/MntR family. As to quaternary structure, homodimer.

It is found in the cytoplasm. With respect to regulation, DNA binding is strongly activated by Mn(2+). Functionally, central regulator of manganese homeostasis. This Geobacillus kaustophilus (strain HTA426) protein is HTH-type transcriptional regulator MntR.